We begin with the raw amino-acid sequence, 260 residues long: 5'-nucleotidase SurE (260 aa).

The a divalent metal cation site is built by Asp13, Asp14, Ser44, and Asn102.

It belongs to the SurE nucleotidase family. It depends on a divalent metal cation as a cofactor.

Its subcellular location is the cytoplasm. The enzyme catalyses a ribonucleoside 5'-phosphate + H2O = a ribonucleoside + phosphate. In terms of biological role, nucleotidase that shows phosphatase activity on nucleoside 5'-monophosphates. This is 5'-nucleotidase SurE from Christiangramia forsetii (strain DSM 17595 / CGMCC 1.15422 / KT0803) (Gramella forsetii).